The chain runs to 622 residues: Chaperone protein HscA homolog (622 aa).

This sequence belongs to the heat shock protein 70 family.

Its function is as follows. Chaperone involved in the maturation of iron-sulfur cluster-containing proteins. Has a low intrinsic ATPase activity which is markedly stimulated by HscB. This Burkholderia lata (strain ATCC 17760 / DSM 23089 / LMG 22485 / NCIMB 9086 / R18194 / 383) protein is Chaperone protein HscA homolog.